Reading from the N-terminus, the 89-residue chain is Small ribosomal subunit protein bS20 (89 aa).

The segment at 1–26 (MANSPQAKKRARQNEKNRKHNASLRS) is disordered. Over residues 7–22 (AKKRARQNEKNRKHNA) the composition is skewed to basic residues.

Belongs to the bacterial ribosomal protein bS20 family.

Binds directly to 16S ribosomal RNA. This chain is Small ribosomal subunit protein bS20, found in Marinobacter nauticus (strain ATCC 700491 / DSM 11845 / VT8) (Marinobacter aquaeolei).